The primary structure comprises 855 residues: MGLLNAVFGTYSEREVKRLKPTIQKINDLDEELQKLSDEELKAKTPAFKERLANGETLDDILPEAFAVVREASKRVLGMKHYDEQLMGGMILHQGRISEMKTGEGKTLVATLPAYLNGLSGNGVHIVTVNDYLAKRDAEQMGELYGFLGLTTGVIVHELNNDQRRESYASDITYGTNNEFGFDYLRDNMVIYKEERVQRPLNFAIVDEVDSILIDEARTPLIISGQGEKSTEFYKVADYFAKKLVVEKDFTRDEKANAVMLTDEGVRKAEVTFKVANYADAENIELQHYVTQALKANFAMRRDKDYMVKDGEVIIVDEFTGRLMEGRRYSDGLHQAIEAKEGVKIARESKTLATITFQNYFRMYKKLSGMTGTALTEENEFREIYGLDVIVIPTHRPIARKDNPDLVFSTELGKIKAVASEVEKAHAKGQPVLVGTVSIEKSELVSSMLKKKGVPHQVLNAKFHEQEAEIISHAGEKGMVTIATNMAGRGTDIKLGEGVVELGGLKIIGTERHESRRIDNQLRGRSGRQGDPGESTFFISLEDDLMRIFGSEKIQGVVEKLGLQEEEAIESKMVSKAIENAQKKVEGNNFDIRKQLLGYDDVMNIQREVIYKQRSEVLEGEDVKEEILSMTKDIIADAVNTYVTGESEDYREEFLHLMVALQDICIAPGTVNLPSLENLSNEEIIESLFESARKFYEHKEEEFGAERLREVERVVLLRAVDTKWMNHIDNMDHLKQGIGLQSFKQIDPVQAYQMEGSEMFNDMIKAIKEETVRLLFHVRIEVAPERVRVAQETAAIHEESSSAAAPGPGQNQPGGPGGPSAGPVAPVRNLDKHGRNELCPCGSGKKFKNCCGREA.

ATP-binding positions include glutamine 85, 103–107 (GEGKT), and aspartate 492. Positions 794-845 (AAIHEESSSAAAPGPGQNQPGGPGGPSAGPVAPVRNLDKHGRNELCPCGSGK) are disordered. Residues 801-811 (SSAAAPGPGQN) are compositionally biased toward low complexity. Cysteine 839, cysteine 841, cysteine 850, and cysteine 851 together coordinate Zn(2+).

This sequence belongs to the SecA family. As to quaternary structure, monomer and homodimer. Part of the essential Sec protein translocation apparatus which comprises SecA, SecYEG and auxiliary proteins SecDF. Other proteins may also be involved. The cofactor is Zn(2+).

The protein localises to the cell membrane. It localises to the cytoplasm. The catalysed reaction is ATP + H2O + cellular proteinSide 1 = ADP + phosphate + cellular proteinSide 2.. In terms of biological role, part of the Sec protein translocase complex. Interacts with the SecYEG preprotein conducting channel. Has a central role in coupling the hydrolysis of ATP to the transfer of proteins into and across the cell membrane, serving as an ATP-driven molecular motor driving the stepwise translocation of polypeptide chains across the membrane. The chain is Protein translocase subunit SecA from Clostridium beijerinckii (strain ATCC 51743 / NCIMB 8052) (Clostridium acetobutylicum).